A 270-amino-acid polypeptide reads, in one-letter code: Phosphatidylglycerol--prolipoprotein diacylglyceryl transferase (270 aa).

7 helical membrane passes run 14-34 (VAFTLFGFSVHWYGIMYILAL), 60-80 (YFFWVEIGVILGARLGYIAIY), 103-123 (FVGIRGMSYHGAVVGFLLATI), 133-153 (LWQLLDLCALCIPFGYIFGRI), 181-201 (PSQLYEAALEGLAVFLILFFY), 209-229 (GELIALYAVLYTLARFVCEFF), and 235-255 (GIGFIIFGLSMGQILSILMFF). R152 is an a 1,2-diacyl-sn-glycero-3-phospho-(1'-sn-glycerol) binding site.

The protein belongs to the Lgt family.

It localises to the cell inner membrane. It carries out the reaction L-cysteinyl-[prolipoprotein] + a 1,2-diacyl-sn-glycero-3-phospho-(1'-sn-glycerol) = an S-1,2-diacyl-sn-glyceryl-L-cysteinyl-[prolipoprotein] + sn-glycerol 1-phosphate + H(+). It participates in protein modification; lipoprotein biosynthesis (diacylglyceryl transfer). Catalyzes the transfer of the diacylglyceryl group from phosphatidylglycerol to the sulfhydryl group of the N-terminal cysteine of a prolipoprotein, the first step in the formation of mature lipoproteins. This chain is Phosphatidylglycerol--prolipoprotein diacylglyceryl transferase, found in Campylobacter curvus (strain 525.92).